Consider the following 511-residue polypeptide: ATP synthase subunit alpha 1 (511 aa).

An ATP-binding site is contributed by 170-177; sequence GDRQTGKT.

Belongs to the ATPase alpha/beta chains family. In terms of assembly, F-type ATPases have 2 components, CF(1) - the catalytic core - and CF(0) - the membrane proton channel. CF(1) has five subunits: alpha(3), beta(3), gamma(1), delta(1), epsilon(1). CF(0) has three main subunits: a(1), b(2) and c(9-12). The alpha and beta chains form an alternating ring which encloses part of the gamma chain. CF(1) is attached to CF(0) by a central stalk formed by the gamma and epsilon chains, while a peripheral stalk is formed by the delta and b chains.

The protein resides in the cell inner membrane. The enzyme catalyses ATP + H2O + 4 H(+)(in) = ADP + phosphate + 5 H(+)(out). Produces ATP from ADP in the presence of a proton gradient across the membrane. The alpha chain is a regulatory subunit. In Gluconobacter oxydans (strain 621H) (Gluconobacter suboxydans), this protein is ATP synthase subunit alpha 1.